The following is a 556-amino-acid chain: Secreted lipase 4 (556 aa).

The signal sequence occupies residues methionine 1 to alanine 21. N-linked (GlcNAc...) asparagine glycans are attached at residues asparagine 46, asparagine 263, asparagine 305, asparagine 411, and asparagine 453.

It belongs to the type-B carboxylesterase/lipase family.

It localises to the secreted. It catalyses the reaction a carboxylic ester + H2O = an alcohol + a carboxylate + H(+). Secreted lipase involved in plant virulence. Has a substrate preference for p-nitrophenyl esters with a carbon chain length of C12 (p-nitrophenyl laureate). In Gibberella zeae (strain ATCC MYA-4620 / CBS 123657 / FGSC 9075 / NRRL 31084 / PH-1) (Wheat head blight fungus), this protein is Secreted lipase 4.